Reading from the N-terminus, the 70-residue chain is MTRLLMLLVRFYQRYLSPLKGGPTCRFTPSCSQYAYEALAKYGAIKGTWLAVRRVLRCHPFHPGGYDPVP.

This sequence belongs to the UPF0161 family.

The protein resides in the cell membrane. Functionally, could be involved in insertion of integral membrane proteins into the membrane. The sequence is that of Putative membrane protein insertion efficiency factor from Symbiobacterium thermophilum (strain DSM 24528 / JCM 14929 / IAM 14863 / T).